Reading from the N-terminus, the 529-residue chain is Extracellular signal-regulated kinase 1 (529 aa).

Disordered regions lie at residues 1-20 (MEPEFDHFQSQMDSDNTHQS) and 100-131 (QQNQQQQSQQMTQQQLQQLMPPPPTSDTSNFN). The span at 8–20 (FQSQMDSDNTHQS) shows a compositional bias: polar residues. Over residues 100 to 117 (QQNQQQQSQQMTQQQLQQ) the composition is skewed to low complexity. Residues 149 to 439 (YSIVKCIGHG…EALAHPYFQS (291 aa)) enclose the Protein kinase domain. Residues 155-163 (IGHGAYGVV) and K178 each bind ATP. D275 (proton acceptor) is an active-site residue. A Phosphothreonine modification is found at T309. The TXY signature appears at 309–311 (TEY). Y311 carries the post-translational modification Phosphotyrosine.

Belongs to the protein kinase superfamily. CMGC Ser/Thr protein kinase family. MAP kinase subfamily. Mg(2+) serves as cofactor. In terms of processing, dually phosphorylated on Thr-309 and Tyr-311, which activates the enzyme.

It catalyses the reaction L-seryl-[protein] + ATP = O-phospho-L-seryl-[protein] + ADP + H(+). The catalysed reaction is L-threonyl-[protein] + ATP = O-phospho-L-threonyl-[protein] + ADP + H(+). With respect to regulation, activated by tyrosine and threonine phosphorylation. In terms of biological role, kinase involved in a signal transduction pathway. The sequence is that of Extracellular signal-regulated kinase 1 (erkA) from Dictyostelium discoideum (Social amoeba).